A 212-amino-acid chain; its full sequence is Ribonuclease HII (212 aa).

The RNase H type-2 domain maps to 20 to 209 (TCVVGVDEVG…VHNILYQEAS (190 aa)). A divalent metal cation-binding residues include Asp26, Glu27, and Asp117.

This sequence belongs to the RNase HII family. Mn(2+) serves as cofactor. The cofactor is Mg(2+).

It localises to the cytoplasm. It carries out the reaction Endonucleolytic cleavage to 5'-phosphomonoester.. Endonuclease that specifically degrades the RNA of RNA-DNA hybrids. This is Ribonuclease HII from Cereibacter sphaeroides (strain ATCC 17023 / DSM 158 / JCM 6121 / CCUG 31486 / LMG 2827 / NBRC 12203 / NCIMB 8253 / ATH 2.4.1.) (Rhodobacter sphaeroides).